Consider the following 215-residue polypeptide: Small ribosomal subunit protein uS7 (215 aa).

Belongs to the universal ribosomal protein uS7 family. Part of the 30S ribosomal subunit.

Its function is as follows. One of the primary rRNA binding proteins, it binds directly to 16S rRNA where it nucleates assembly of the head domain of the 30S subunit. Is located at the subunit interface close to the decoding center. This chain is Small ribosomal subunit protein uS7, found in Thermococcus onnurineus (strain NA1).